Reading from the N-terminus, the 654-residue chain is Fructose-1,6-bisphosphatase class 3 (654 aa).

Residues 288–307 (NPAFKPKKRPDKHERLTQRE) are disordered. Residues 298 to 307 (DKHERLTQRE) are compositionally biased toward basic and acidic residues.

This sequence belongs to the FBPase class 3 family. Mn(2+) serves as cofactor.

It catalyses the reaction beta-D-fructose 1,6-bisphosphate + H2O = beta-D-fructose 6-phosphate + phosphate. The protein operates within carbohydrate biosynthesis; gluconeogenesis. The chain is Fructose-1,6-bisphosphatase class 3 from Staphylococcus aureus (strain bovine RF122 / ET3-1).